The following is a 434-amino-acid chain: Methylenetetrahydrofolate--tRNA-(uracil-5-)-methyltransferase TrmFO (434 aa).

9–14 serves as a coordination point for FAD; it reads GAGLAG.

It belongs to the MnmG family. TrmFO subfamily. FAD is required as a cofactor.

It is found in the cytoplasm. The catalysed reaction is uridine(54) in tRNA + (6R)-5,10-methylene-5,6,7,8-tetrahydrofolate + NADH + H(+) = 5-methyluridine(54) in tRNA + (6S)-5,6,7,8-tetrahydrofolate + NAD(+). It catalyses the reaction uridine(54) in tRNA + (6R)-5,10-methylene-5,6,7,8-tetrahydrofolate + NADPH + H(+) = 5-methyluridine(54) in tRNA + (6S)-5,6,7,8-tetrahydrofolate + NADP(+). Functionally, catalyzes the folate-dependent formation of 5-methyl-uridine at position 54 (M-5-U54) in all tRNAs. The chain is Methylenetetrahydrofolate--tRNA-(uracil-5-)-methyltransferase TrmFO from Fusobacterium nucleatum subsp. nucleatum (strain ATCC 25586 / DSM 15643 / BCRC 10681 / CIP 101130 / JCM 8532 / KCTC 2640 / LMG 13131 / VPI 4355).